Reading from the N-terminus, the 88-residue chain is Small ribosomal subunit protein uS15 (88 aa).

Belongs to the universal ribosomal protein uS15 family. Part of the 30S ribosomal subunit. Forms a bridge to the 50S subunit in the 70S ribosome, contacting the 23S rRNA.

Its function is as follows. One of the primary rRNA binding proteins, it binds directly to 16S rRNA where it helps nucleate assembly of the platform of the 30S subunit by binding and bridging several RNA helices of the 16S rRNA. Forms an intersubunit bridge (bridge B4) with the 23S rRNA of the 50S subunit in the ribosome. The polypeptide is Small ribosomal subunit protein uS15 (Opitutus terrae (strain DSM 11246 / JCM 15787 / PB90-1)).